The primary structure comprises 325 residues: VSG expression site-associated protein 117A (325 aa).

An N-terminal signal peptide occupies residues Met1 to Glu23. 3 N-linked (GlcNAc...) asparagine glycosylation sites follow: Asn72, Asn290, and Asn313.

Functionally, not known but may be related to activation of the variant surface glycoprotein genes. The polypeptide is VSG expression site-associated protein 117A (Trypanosoma brucei brucei).